The sequence spans 50 residues: Toxic protein HokC (50 aa).

Topologically, residues 1 to 5 are cytoplasmic; it reads MKQHK. Residues 6–24 form a helical; Signal-anchor for type II membrane protein membrane-spanning segment; that stretch reads AMIVALIVICITAVVAALV. Residues 25–50 are Periplasmic-facing; sequence TRKDLCEVHIRTGQTEVAVFTAYESE.

Belongs to the Hok/Gef family. Homodimer; disulfide-linked.

The protein localises to the cell inner membrane. Its function is as follows. Toxic component of a type I toxin-antitoxin (TA) system. When overexpressed kills cells within minutes; causes collapse of the transmembrane potential and arrest of respiration. Its toxic effect is probably neutralized by antisense antitoxin RNA SokC. The sequence is that of Toxic protein HokC from Escherichia coli (strain K12).